The primary structure comprises 720 residues: Inactive serine protease PAMR1 (720 aa).

An N-terminal signal peptide occupies residues 1–21 (MELGWWPQLGLAFLQLLLISS). Cystine bridges form between cysteine 128/cysteine 150, cysteine 177/cysteine 199, cysteine 239/cysteine 250, cysteine 244/cysteine 260, cysteine 262/cysteine 271, cysteine 280/cysteine 329, cysteine 315/cysteine 342, and cysteine 414/cysteine 442. One can recognise a CUB domain in the interval 128–236 (CGQVLRVPKG…DGFHAIFEEI (109 aa)). Residues 235–272 (EITACSSSPCFHDGTCLLDSTGSYKCACLAGYTGKHCE) enclose the EGF-like domain. Sushi domains are found at residues 278–344 (RNCS…ICIK) and 387–444 (APTK…SCIP). The Peptidase S1 domain occupies 445–720 (ICGKTENVSA…FKDWIERNMK (276 aa)). N-linked (GlcNAc...) asparagine glycosylation occurs at asparagine 451. 3 cysteine pairs are disulfide-bonded: cysteine 489–cysteine 505, cysteine 630–cysteine 649, and cysteine 661–cysteine 697.

It belongs to the peptidase S1 family.

The protein localises to the secreted. Its function is as follows. May play a role in regeneration of skeletal muscle. The polypeptide is Inactive serine protease PAMR1 (PAMR1) (Bos taurus (Bovine)).